A 215-amino-acid chain; its full sequence is MKIILLGPPGAGKGTQAKLISSEFSIPHISTGDIFRANISGKTELGMKAKGYMDKGLLVPDELTIDIVKDRISKDDCKSGFLLDGFPRTVNQAEALDKFLVGRKEKIDCALLIDVPREKIFNRMTGRRVCSKCGASYHIEYNPTKVEGICDLCGSPVVQRKDDSEDTVKERLDVYDRQTEPLVVYYRNEAVLKSVDGTQDIDKVFEDIRNVLGEI.

Residue 10 to 15 participates in ATP binding; sequence GAGKGT. Positions 30 to 59 are NMP; the sequence is STGDIFRANISGKTELGMKAKGYMDKGLLV. Residues Thr31, Arg36, 57–59, 85–88, and Gln92 each bind AMP; these read LLV and GFPR. Residues 126–163 form an LID region; the sequence is GRRVCSKCGASYHIEYNPTKVEGICDLCGSPVVQRKDD. Arg127 is an ATP binding site. The Zn(2+) site is built by Cys130 and Cys133. 136-137 provides a ligand contact to ATP; that stretch reads SY. Positions 150 and 153 each coordinate Zn(2+). AMP is bound by residues Arg160 and Arg171. Gln199 serves as a coordination point for ATP.

This sequence belongs to the adenylate kinase family. In terms of assembly, monomer.

The protein localises to the cytoplasm. The catalysed reaction is AMP + ATP = 2 ADP. Its pathway is purine metabolism; AMP biosynthesis via salvage pathway; AMP from ADP: step 1/1. Its function is as follows. Catalyzes the reversible transfer of the terminal phosphate group between ATP and AMP. Plays an important role in cellular energy homeostasis and in adenine nucleotide metabolism. In Clostridium acetobutylicum (strain ATCC 824 / DSM 792 / JCM 1419 / IAM 19013 / LMG 5710 / NBRC 13948 / NRRL B-527 / VKM B-1787 / 2291 / W), this protein is Adenylate kinase.